The chain runs to 166 residues: Cofilin-2 (166 aa).

At Ala2 the chain carries N-acetylalanine. At Ser3 the chain carries Phosphoserine. The ADF-H domain maps to 4–153 (GVTVNDEVIK…KDRSTLGEKL (150 aa)). Thr6 is modified (phosphothreonine). Positions 30-34 (KKRKK) match the Nuclear localization signal motif.

This sequence belongs to the actin-binding proteins ADF family. Post-translationally, the phosphorylation of Ser-24 may prevent recognition of the nuclear localization signal.

The protein resides in the nucleus matrix. Its subcellular location is the cytoplasm. It is found in the cytoskeleton. Controls reversibly actin polymerization and depolymerization in a pH-sensitive manner. It has the ability to bind G- and F-actin in a 1:1 ratio of cofilin to actin. It is the major component of intranuclear and cytoplasmic actin rods. This is Cofilin-2 (CFL2) from Bos taurus (Bovine).